The sequence spans 449 residues: Signal recognition particle protein (449 aa).

Residues 109–116 (GLQGSGKT), 191–195 (DTAGR), and 249–252 (SRID) each bind GTP.

Belongs to the GTP-binding SRP family. SRP54 subfamily. Part of the signal recognition particle protein translocation system, which is composed of SRP and FtsY. SRP is a ribonucleoprotein composed of Ffh and a 4.5S RNA molecule.

It localises to the cytoplasm. The enzyme catalyses GTP + H2O = GDP + phosphate + H(+). In terms of biological role, involved in targeting and insertion of nascent membrane proteins into the cytoplasmic membrane. Binds to the hydrophobic signal sequence of the ribosome-nascent chain (RNC) as it emerges from the ribosomes. The SRP-RNC complex is then targeted to the cytoplasmic membrane where it interacts with the SRP receptor FtsY. Interaction with FtsY leads to the transfer of the RNC complex to the Sec translocase for insertion into the membrane, the hydrolysis of GTP by both Ffh and FtsY, and the dissociation of the SRP-FtsY complex into the individual components. This is Signal recognition particle protein from Rickettsia bellii (strain RML369-C).